A 315-amino-acid polypeptide reads, in one-letter code: 4-hydroxy-3-methylbut-2-enyl diphosphate reductase (315 aa).

Cys-12 provides a ligand contact to [4Fe-4S] cluster. Positions 41 and 74 each coordinate (2E)-4-hydroxy-3-methylbut-2-enyl diphosphate. Dimethylallyl diphosphate-binding residues include His-41 and His-74. Residues His-41 and His-74 each coordinate isopentenyl diphosphate. A [4Fe-4S] cluster-binding site is contributed by Cys-96. A (2E)-4-hydroxy-3-methylbut-2-enyl diphosphate-binding site is contributed by His-124. Position 124 (His-124) interacts with dimethylallyl diphosphate. Position 124 (His-124) interacts with isopentenyl diphosphate. Catalysis depends on Glu-126, which acts as the Proton donor. Thr-168 contributes to the (2E)-4-hydroxy-3-methylbut-2-enyl diphosphate binding site. Position 198 (Cys-198) interacts with [4Fe-4S] cluster. Residues Ser-226, Ser-227, Asn-228, and Ser-270 each contribute to the (2E)-4-hydroxy-3-methylbut-2-enyl diphosphate site. The dimethylallyl diphosphate site is built by Ser-226, Ser-227, Asn-228, and Ser-270. Isopentenyl diphosphate contacts are provided by Ser-226, Ser-227, Asn-228, and Ser-270.

The protein belongs to the IspH family. It depends on [4Fe-4S] cluster as a cofactor.

The enzyme catalyses isopentenyl diphosphate + 2 oxidized [2Fe-2S]-[ferredoxin] + H2O = (2E)-4-hydroxy-3-methylbut-2-enyl diphosphate + 2 reduced [2Fe-2S]-[ferredoxin] + 2 H(+). The catalysed reaction is dimethylallyl diphosphate + 2 oxidized [2Fe-2S]-[ferredoxin] + H2O = (2E)-4-hydroxy-3-methylbut-2-enyl diphosphate + 2 reduced [2Fe-2S]-[ferredoxin] + 2 H(+). Its pathway is isoprenoid biosynthesis; dimethylallyl diphosphate biosynthesis; dimethylallyl diphosphate from (2E)-4-hydroxy-3-methylbutenyl diphosphate: step 1/1. The protein operates within isoprenoid biosynthesis; isopentenyl diphosphate biosynthesis via DXP pathway; isopentenyl diphosphate from 1-deoxy-D-xylulose 5-phosphate: step 6/6. In terms of biological role, catalyzes the conversion of 1-hydroxy-2-methyl-2-(E)-butenyl 4-diphosphate (HMBPP) into a mixture of isopentenyl diphosphate (IPP) and dimethylallyl diphosphate (DMAPP). Acts in the terminal step of the DOXP/MEP pathway for isoprenoid precursor biosynthesis. The polypeptide is 4-hydroxy-3-methylbut-2-enyl diphosphate reductase (Pseudomonas putida (strain ATCC 700007 / DSM 6899 / JCM 31910 / BCRC 17059 / LMG 24140 / F1)).